The following is a 349-amino-acid chain: Flagellar P-ring protein (349 aa).

Residues 1-16 (MKYFFIIALLLSSLYS) form the signal peptide.

Belongs to the FlgI family. As to quaternary structure, the basal body constitutes a major portion of the flagellar organelle and consists of four rings (L,P,S, and M) mounted on a central rod.

The protein resides in the periplasm. The protein localises to the bacterial flagellum basal body. Functionally, assembles around the rod to form the L-ring and probably protects the motor/basal body from shearing forces during rotation. The protein is Flagellar P-ring protein of Aliarcobacter butzleri (strain RM4018) (Arcobacter butzleri).